Reading from the N-terminus, the 395-residue chain is RNA polymerase II elongation factor ELL3 (395 aa).

4 disordered regions span residues 124-149 (SSLQRHNRTEDARDRESWQNVGDYPE), 163-182 (VPDPLASSQGQSLPGSSREH), 194-218 (LPNRDPDQALPPSASQKHVDKKRPA), and 233-279 (LAPS…SLSP). Basic and acidic residues predominate over residues 130–140 (NRTEDARDRES). A compositionally biased stretch (polar residues) spans 168-177 (ASSQGQSLPG). A compositionally biased stretch (acidic residues) spans 246–258 (LQEEDWEQEDKDE). A compositionally biased stretch (polar residues) spans 268–277 (PSVQADSESL). Positions 283–393 (PDYLLQYRAI…LILEFEEKNR (111 aa)) constitute an OCEL domain.

It belongs to the ELL/occludin family. As to quaternary structure, interacts with AFF4. Component of the super elongation complex (SEC), at least composed of EAF1, EAF2, CDK9, MLLT3/AF9, AFF (AFF1 or AFF4), the P-TEFb complex and ELL (ELL, ELL2 or ELL3). Component of the little elongation complex (LEC), at least composed of ELL (ELL, ELL2 or ELL3), ZC3H8, ICE1 and ICE2.

It localises to the nucleus. Functionally, enhancer-binding elongation factor that specifically binds enhancers in embryonic stem cells (ES cells), marks them, and is required for their future activation during stem cell specification. Elongation factor component of the super elongation complex (SEC), a complex required to increase the catalytic rate of RNA polymerase II transcription by suppressing transient pausing by the polymerase at multiple sites along the DNA. Component of the little elongation complex (LEC), a complex required to regulate small nuclear RNA (snRNA) gene transcription by RNA polymerase II and III. Does not only bind to enhancer regions of active genes, but also marks the enhancers that are in a poised or inactive state in ES cells and is required for establishing proper RNA polymerase II occupancy at developmentally regulated genes in a cohesin-dependent manner. Probably required for priming developmentally regulated genes for later recruitment of the super elongation complex (SEC), for transcriptional activation during differentiation. Required for recruitment of P-TEFb within SEC during differentiation. Probably preloaded on germ cell chromatin, suggesting that it may prime gene activation by marking enhancers as early as in the germ cells. Promoting epithelial-mesenchymal transition (EMT). This chain is RNA polymerase II elongation factor ELL3 (ELL3), found in Bos taurus (Bovine).